Consider the following 514-residue polypeptide: ATP synthase subunit alpha (514 aa).

170–177 is a binding site for ATP; sequence GDRQIGKT.

Belongs to the ATPase alpha/beta chains family. F-type ATPases have 2 components, CF(1) - the catalytic core - and CF(0) - the membrane proton channel. CF(1) has five subunits: alpha(3), beta(3), gamma(1), delta(1), epsilon(1). CF(0) has three main subunits: a(1), b(2) and c(9-12). The alpha and beta chains form an alternating ring which encloses part of the gamma chain. CF(1) is attached to CF(0) by a central stalk formed by the gamma and epsilon chains, while a peripheral stalk is formed by the delta and b chains.

It is found in the cell inner membrane. It carries out the reaction ATP + H2O + 4 H(+)(in) = ADP + phosphate + 5 H(+)(out). Functionally, produces ATP from ADP in the presence of a proton gradient across the membrane. The alpha chain is a regulatory subunit. This Pseudomonas putida (strain ATCC 47054 / DSM 6125 / CFBP 8728 / NCIMB 11950 / KT2440) protein is ATP synthase subunit alpha.